The sequence spans 156 residues: Putative NrdI-like protein (156 aa).

Belongs to the NrdI family.

This Streptococcus pneumoniae serotype 4 (strain ATCC BAA-334 / TIGR4) protein is Putative NrdI-like protein.